Here is a 76-residue protein sequence, read N- to C-terminus: Small ribosomal subunit protein bS18 (76 aa).

It belongs to the bacterial ribosomal protein bS18 family. Part of the 30S ribosomal subunit. Forms a tight heterodimer with protein bS6.

Functionally, binds as a heterodimer with protein bS6 to the central domain of the 16S rRNA, where it helps stabilize the platform of the 30S subunit. This Methylococcus capsulatus (strain ATCC 33009 / NCIMB 11132 / Bath) protein is Small ribosomal subunit protein bS18.